A 262-amino-acid chain; its full sequence is Ribosomal RNA small subunit methyltransferase A (262 aa).

S-adenosyl-L-methionine contacts are provided by H16, L18, G43, E64, D89, and N109.

This sequence belongs to the class I-like SAM-binding methyltransferase superfamily. rRNA adenine N(6)-methyltransferase family. RsmA subfamily.

The protein resides in the cytoplasm. It carries out the reaction adenosine(1518)/adenosine(1519) in 16S rRNA + 4 S-adenosyl-L-methionine = N(6)-dimethyladenosine(1518)/N(6)-dimethyladenosine(1519) in 16S rRNA + 4 S-adenosyl-L-homocysteine + 4 H(+). Its function is as follows. Specifically dimethylates two adjacent adenosines (A1518 and A1519) in the loop of a conserved hairpin near the 3'-end of 16S rRNA in the 30S particle. May play a critical role in biogenesis of 30S subunits. The polypeptide is Ribosomal RNA small subunit methyltransferase A (Xanthomonas campestris pv. campestris (strain B100)).